The sequence spans 313 residues: Interferon-inducible double-stranded RNA-dependent protein kinase activator A (313 aa).

Positions 1–18 (MSQSRHRAEAPPLEREDS) are enriched in basic and acidic residues. The interval 1–21 (MSQSRHRAEAPPLEREDSGTF) is disordered. Sufficient for self-association and interaction with TARBP2 regions lie at residues 1–103 (MSQS…KANA), 102–195 (NASI…FSNI), and 195–313 (ISPE…AERK). Serine 18 is modified (phosphoserine). 3 DRBM domains span residues 34–101 (TPIQ…ILKA), 126–194 (NPIG…KFSN), and 240–308 (DYIQ…YLKI). Residues serine 167, serine 246, and serine 287 each carry the phosphoserine modification.

Belongs to the PRKRA family. In terms of assembly, homodimer. Interacts with EIF2AK2/PKR through its DRBM domains. Interacts with DICER1, AGO2 and TARBP2. Also able to interact with dsRNA. Interacts with UBC9. Forms a complex with UBC9 and p53/TP53. Interacts with DUS2L (via DRBM domain). Interacts with RIGI. As to quaternary structure, (Microbial infection) Interacts with ebolavirus protein VP35; this interaction inhibits the interaction between RIGI and PRKRA. In addition, this interaction disrupts the interaction between VP35 and the viral polymerase L. So the VP35-PRKRA interaction plays a critical role in determining the outcome of ebolavirus infection. The interaction PRKRA-VP35 also prevents PRKRA binding to DICER1 and thus allows the virus to counteract host RNA silencing. (Microbial infection) Interacts with human herpesvirus 8 protein MTA/ORF57; this interaction inhibits stress granule formation. In terms of processing, phosphorylated at Ser-246 in unstressed cells and at Ser-287 in stressed cells. Phosphorylation at Ser-246 appears to be a prerequisite for subsequent phosphorylation at Ser-287. Phosphorylation at Ser-246 and Ser-287 are necessary for activation of EIF2AK2/PKR under conditions of stress.

The protein localises to the cytoplasm. It localises to the perinuclear region. Activates EIF2AK2/PKR in the absence of double-stranded RNA (dsRNA), leading to phosphorylation of EIF2S1/EFI2-alpha and inhibition of translation and induction of apoptosis. Required for siRNA production by DICER1 and for subsequent siRNA-mediated post-transcriptional gene silencing. Does not seem to be required for processing of pre-miRNA to miRNA by DICER1. Promotes UBC9-p53/TP53 association and sumoylation and phosphorylation of p53/TP53 at 'Lys-386' at 'Ser-392' respectively and enhances its activity in a EIF2AK2/PKR-dependent manner. This Homo sapiens (Human) protein is Interferon-inducible double-stranded RNA-dependent protein kinase activator A (PRKRA).